The following is an 89-amino-acid chain: UPF0297 protein MGAS9429_Spy1808 (89 aa).

Belongs to the UPF0297 family.

The chain is UPF0297 protein MGAS9429_Spy1808 from Streptococcus pyogenes serotype M12 (strain MGAS9429).